The sequence spans 449 residues: UDP-N-acetylmuramoylalanine--D-glutamate ligase (449 aa).

Position 119–125 (Gly-119–Thr-125) interacts with ATP.

It belongs to the MurCDEF family.

The protein resides in the cytoplasm. It carries out the reaction UDP-N-acetyl-alpha-D-muramoyl-L-alanine + D-glutamate + ATP = UDP-N-acetyl-alpha-D-muramoyl-L-alanyl-D-glutamate + ADP + phosphate + H(+). It functions in the pathway cell wall biogenesis; peptidoglycan biosynthesis. Its function is as follows. Cell wall formation. Catalyzes the addition of glutamate to the nucleotide precursor UDP-N-acetylmuramoyl-L-alanine (UMA). This is UDP-N-acetylmuramoylalanine--D-glutamate ligase from Streptococcus suis (strain 98HAH33).